Consider the following 502-residue polypeptide: Uric acid degradation bifunctional protein (502 aa).

The segment at 1-178 (MMRLKQLNEM…NSMTKHKERV (178 aa)) is OHCU decarboxylase. Residue His68 is the Proton donor; for OHCU decarboxylase activity of the active site. 5-hydroxy-2-oxo-4-ureido-2,5-dihydro-1H-imidazole-5-carboxylate-binding positions include Pro69, 81-85 (SQEEQ), and 116-120 (FVMAV). The interval 179 to 502 (MYYGKGDVFA…DEPDHKGALK (324 aa)) is urate oxidase. The Charge relay system; for urate oxidase activity role is filled by Lys183. Lys194 serves as the catalytic Charge relay system. Thr243 functions as the Charge relay system; for urate oxidase activity in the catalytic mechanism. Positions 243, 244, 354, 371, 419, 420, and 446 each coordinate urate.

In the N-terminal section; belongs to the OHCU decarboxylase family. This sequence in the C-terminal section; belongs to the uricase family.

It catalyses the reaction 5-hydroxy-2-oxo-4-ureido-2,5-dihydro-1H-imidazole-5-carboxylate + H(+) = (S)-allantoin + CO2. The catalysed reaction is urate + O2 + H2O = 5-hydroxyisourate + H2O2. The protein operates within purine metabolism; urate degradation; (S)-allantoin from urate: step 1/3. Its pathway is purine metabolism; urate degradation; (S)-allantoin from urate: step 3/3. In terms of biological role, catalyzes two steps in the degradation of uric acid, i.e. the oxidation of uric acid to 5-hydroxyisourate (HIU) and the stereoselective decarboxylation of 2-oxo-4-hydroxy-4-carboxy-5-ureidoimidazoline (OHCU) to (S)-allantoin. The sequence is that of Uric acid degradation bifunctional protein (uao) from Bacillus sp. (strain TB-90).